A 164-amino-acid chain; its full sequence is NADH-quinone oxidoreductase subunit B (164 aa).

The [4Fe-4S] cluster site is built by Cys38, Cys39, Cys104, and Cys133.

The protein belongs to the complex I 20 kDa subunit family. NDH-1 is composed of 14 different subunits. Subunits NuoB, C, D, E, F, and G constitute the peripheral sector of the complex. It depends on [4Fe-4S] cluster as a cofactor.

It localises to the cell inner membrane. The enzyme catalyses a quinone + NADH + 5 H(+)(in) = a quinol + NAD(+) + 4 H(+)(out). Functionally, NDH-1 shuttles electrons from NADH, via FMN and iron-sulfur (Fe-S) centers, to quinones in the respiratory chain. The immediate electron acceptor for the enzyme in this species is believed to be ubiquinone. Couples the redox reaction to proton translocation (for every two electrons transferred, four hydrogen ions are translocated across the cytoplasmic membrane), and thus conserves the redox energy in a proton gradient. The polypeptide is NADH-quinone oxidoreductase subunit B (Protochlamydia amoebophila (strain UWE25)).